The following is a 232-amino-acid chain: 7-cyano-7-deazaguanine synthase (232 aa).

8-18 (FSGGQDSTTCL) contacts ATP. Cys-187, Cys-196, Cys-199, and Cys-202 together coordinate Zn(2+).

It belongs to the QueC family. Zn(2+) serves as cofactor.

The catalysed reaction is 7-carboxy-7-deazaguanine + NH4(+) + ATP = 7-cyano-7-deazaguanine + ADP + phosphate + H2O + H(+). It participates in purine metabolism; 7-cyano-7-deazaguanine biosynthesis. In terms of biological role, catalyzes the ATP-dependent conversion of 7-carboxy-7-deazaguanine (CDG) to 7-cyano-7-deazaguanine (preQ(0)). This chain is 7-cyano-7-deazaguanine synthase, found in Vibrio vulnificus (strain YJ016).